A 447-amino-acid chain; its full sequence is Rab GDP dissociation inhibitor alpha (447 aa).

It belongs to the Rab GDI family. Interacts with RHOH. Interacts with the non-phosphorylated forms of RAB1A, RAB3A, RAB5A, RAB5B, RAB5C, RAB8A, RAB8B, RAB10, RAB12, RAB35, and RAB43.

The protein localises to the cytoplasm. Its subcellular location is the golgi apparatus. It localises to the trans-Golgi network. Regulates the GDP/GTP exchange reaction of most Rab proteins by inhibiting the dissociation of GDP from them, and the subsequent binding of GTP to them. Promotes the dissociation of GDP-bound Rab proteins from the membrane and inhibits their activation. Promotes the dissociation of RAB1A, RAB3A, RAB5A and RAB10 from membranes. The sequence is that of Rab GDP dissociation inhibitor alpha (GDI1) from Macaca fascicularis (Crab-eating macaque).